A 69-amino-acid polypeptide reads, in one-letter code: M-poneratoxin-Dq4e (69 aa).

The signal sequence occupies residues 1-25 (MKLSAFTLAFALILMMAIMYNMAEA). A propeptide spanning residues 26 to 39 (AALADADADAEAIA) is cleaved from the precursor.

Expressed by the venom gland.

The protein resides in the secreted. In terms of biological role, may have antimicrobial properties, like most ant linear peptides. In addition, when tested in vitro on the parasite Trypanosoma cruzi (responsible of the Chagas disease), is able to moderately reduce the number of the three forms (epimastigote, trypomastigote and amastigote) by inducing cell death through necrosis. This chain is M-poneratoxin-Dq4e, found in Dinoponera quadriceps (South American ant).